The chain runs to 209 residues: Large ribosomal subunit protein uL3 (209 aa).

Residues 128–163 are disordered; it reads AHRGPMTHGSKFHRAVGSMGASSDPSRTFKNKRMPG.

The protein belongs to the universal ribosomal protein uL3 family. As to quaternary structure, part of the 50S ribosomal subunit. Forms a cluster with proteins L14 and L19.

Functionally, one of the primary rRNA binding proteins, it binds directly near the 3'-end of the 23S rRNA, where it nucleates assembly of the 50S subunit. This Clostridium botulinum (strain 657 / Type Ba4) protein is Large ribosomal subunit protein uL3.